Here is a 952-residue protein sequence, read N- to C-terminus: UvrABC system protein A (952 aa).

38-45 (GLSGSGKS) lines the ATP pocket. Residues 258–285 (CNECGFSIPELEPRFFSFNSPVGACKSC) form a C4-type zinc finger. 2 ABC transporter domains span residues 315 to 596 (FRSV…KKSI) and 616 to 945 (GNGK…LFLE). Position 648 to 655 (648 to 655 (GVSGSGKS)) interacts with ATP. A C4-type zinc finger spans residues 747-773 (CENCSGDGLIKIEMHFLPDVFVKCESC).

The protein belongs to the ABC transporter superfamily. UvrA family. As to quaternary structure, forms a heterotetramer with UvrB during the search for lesions.

The protein localises to the cytoplasm. Functionally, the UvrABC repair system catalyzes the recognition and processing of DNA lesions. UvrA is an ATPase and a DNA-binding protein. A damage recognition complex composed of 2 UvrA and 2 UvrB subunits scans DNA for abnormalities. When the presence of a lesion has been verified by UvrB, the UvrA molecules dissociate. The sequence is that of UvrABC system protein A from Malacoplasma penetrans (strain HF-2) (Mycoplasma penetrans).